The chain runs to 159 residues: Single-stranded DNA-binding protein 2 (159 aa).

The SSB domain maps to 2-104 (MNRVVLVGRL…VVAESVQFLE (103 aa)). Positions 106-159 (RNHAEGATSNNYQNEANYSNNNKTSSYRADTSQKSDSFANEGKPIDINPDDLPF) are disordered. The segment covering 114-127 (SNNYQNEANYSNNN) has biased composition (low complexity). Residues 128–143 (KTSSYRADTSQKSDSF) show a composition bias toward polar residues.

As to quaternary structure, homotetramer.

The sequence is that of Single-stranded DNA-binding protein 2 (ssb2) from Listeria innocua serovar 6a (strain ATCC BAA-680 / CLIP 11262).